A 541-amino-acid chain; its full sequence is Zinc finger protein 513 (541 aa).

The disordered stretch occupies residues 1–118 (MPRRKQSHPQ…GEARGERPGP (118 aa)). The segment covering 44 to 57 (LEFEEEEEEEEGDG) has biased composition (acidic residues). Phosphoserine is present on residues S85 and S96. Residues 103–115 (EPARGPGEARGER) are compositionally biased toward basic and acidic residues. 8 C2H2-type zinc fingers span residues 150–172 (YSCR…MQTH), 178–200 (FRCG…TRTH), 206–228 (YRCP…QRTH), 360–382 (FACS…MKTH), 388–410 (FRCA…QRVH), 416–438 (YKCP…GRIH), 444–466 (FRCS…MLRH), and 472–494 (FRCA…QKVH). The segment at 492 to 541 (KVHGHGGAGGPGLSASEGWAPPHSPPSVLSSRGPPALGTAGSRAVHTDSS) is disordered.

Belongs to the krueppel C2H2-type zinc-finger protein family. As to quaternary structure, binds DNA. Can associate with the proximal promoter regions of PAX6 and SP4, and their known targets including ARR3, RHO, OPN1MW2 and OPN1SW. As to expression, in the retina, expressed in the outer and inner nuclear layers, and the ganglion cell layer.

The protein localises to the nucleus. In terms of biological role, transcriptional regulator that plays a role in retinal development and maintenance. The sequence is that of Zinc finger protein 513 (ZNF513) from Homo sapiens (Human).